Here is a 153-residue protein sequence, read N- to C-terminus: FAD synthase (153 aa).

Residues 9–10, 14–17, Asp97, and Tyr124 each bind ATP; these read TF and HPGH.

It belongs to the archaeal FAD synthase family. In terms of assembly, homodimer. It depends on a divalent metal cation as a cofactor.

The enzyme catalyses FMN + ATP + H(+) = FAD + diphosphate. Its pathway is cofactor biosynthesis; FAD biosynthesis; FAD from FMN: step 1/1. Its function is as follows. Catalyzes the transfer of the AMP portion of ATP to flavin mononucleotide (FMN) to produce flavin adenine dinucleotide (FAD) coenzyme. In Methanobrevibacter smithii (strain ATCC 35061 / DSM 861 / OCM 144 / PS), this protein is FAD synthase.